Consider the following 417-residue polypeptide: uncharacterized protein (417 aa).

It to M.tuberculosis Rv2067c.

This is an uncharacterized protein from Synechococcus sp. (strain ATCC 27144 / PCC 6301 / SAUG 1402/1) (Anacystis nidulans).